A 478-amino-acid polypeptide reads, in one-letter code: 5-hydroxytryptamine receptor 3A (478 aa).

A signal peptide spans 1 to 23 (MLLWVQQALLALLLPTLLAQGEA). At 24-241 (RRSRNTTRPA…MKFYVVIRRR (218 aa)) the chain is on the extracellular side. Residues Asn28, Asn104, Asn170, and Asn186 are each glycosylated (N-linked (GlcNAc...) asparagine). Cys157 and Cys171 form a disulfide bridge. The chain crosses the membrane as a helical span at residues 242–268 (PLFYVVSLLLPSIFLMVMDIVGFYLPP). Topologically, residues 269–273 (NSGER) are cytoplasmic. The chain crosses the membrane as a helical span at residues 274–292 (VSFKITLLLGYSVFLIIVS). Residues 293–302 (DTLPATAIGT) are Extracellular-facing. A helical transmembrane segment spans residues 303-321 (PLIGVYFVVCMALLVISLA). At 322–455 (ETIFIVRLVH…GSVLDKLLFH (134 aa)) the chain is on the cytoplasmic side. The segment at 389 to 408 (GGPQDFEKSPRDRCSPPPPP) is disordered. The span at 393 to 402 (DFEKSPRDRC) shows a compositional bias: basic and acidic residues. The interval 414–450 (AVCGLLQELSSIRQFLEKRDEIREVARDWLRVGSVLD) is HA-stretch; determines single-channel conductance in 5-HT3 receptors. A helical membrane pass occupies residues 456 to 475 (IYLLAVLAYSITLVMLWSIW). At 476-478 (QYA) the chain is on the extracellular side.

It belongs to the ligand-gated ion channel (TC 1.A.9) family. 5-hydroxytryptamine receptor (TC 1.A.9.2) subfamily. HTR3A sub-subfamily. Forms homopentameric as well as heteropentameric serotonin-activated cation-selective channel complexes with HTR3B or HTR3C or HTR3D or HTR3E. The homomeric complex is functional but exhibits low conductance with modified voltage dependence, and decreased agonist and antagonist affinity. Heteropentameric complexes display properties which resemble that of neuronal serotonin-activated channels in vivo. Interacts with RIC3. Expressed in cerebral cortex, amygdala, hippocampus, and testis. Detected in monocytes of the spleen and tonsil, in small and large intestine, uterus, prostate, ovary and placenta.

The protein localises to the postsynaptic cell membrane. Its subcellular location is the cell membrane. The catalysed reaction is Na(+)(in) = Na(+)(out). The enzyme catalyses K(+)(in) = K(+)(out). It catalyses the reaction Ca(2+)(in) = Ca(2+)(out). It carries out the reaction Mg(2+)(in) = Mg(2+)(out). Its function is as follows. Forms serotonin (5-hydroxytryptamine/5-HT3)-activated cation-selective channel complexes, which when activated cause fast, depolarizing responses in neurons. In Homo sapiens (Human), this protein is 5-hydroxytryptamine receptor 3A.